An 81-amino-acid chain; its full sequence is Photosystem I iron-sulfur center (81 aa).

2 4Fe-4S ferredoxin-type domains span residues 2–31 (SHAVKIYDTCIGCTQCVRACPLDVLEMVPW) and 39–68 (IASSPRTEDCVGCKRCETACPTDFLSIRVY). The [4Fe-4S] cluster site is built by C11, C14, C17, C21, C48, C51, C54, and C58.

The cyanobacterial PSI reaction center is composed of one copy each of PsaA,B,C,D,E,F,I,J,K,L,M and X, and forms trimeric complexes. The cofactor is [4Fe-4S] cluster.

Its subcellular location is the cellular thylakoid membrane. It catalyses the reaction reduced [plastocyanin] + hnu + oxidized [2Fe-2S]-[ferredoxin] = oxidized [plastocyanin] + reduced [2Fe-2S]-[ferredoxin]. In terms of biological role, apoprotein for the two 4Fe-4S centers FA and FB of photosystem I (PSI); essential for photochemical activity. FB is the terminal electron acceptor of PSI, donating electrons to ferredoxin. The C-terminus interacts with PsaA/B/D and helps assemble the protein into the PSI complex. Required for binding of PsaD and PsaE to PSI. PSI is a plastocyanin/cytochrome c6-ferredoxin oxidoreductase, converting photonic excitation into a charge separation, which transfers an electron from the donor P700 chlorophyll pair to the spectroscopically characterized acceptors A0, A1, FX, FA and FB in turn. The protein is Photosystem I iron-sulfur center of Prochlorococcus marinus (strain NATL2A).